Consider the following 359-residue polypeptide: Phosphate acyltransferase (359 aa).

The disordered stretch occupies residues S335–A359.

This sequence belongs to the PlsX family. As to quaternary structure, homodimer. Probably interacts with PlsY.

The protein resides in the cytoplasm. It carries out the reaction a fatty acyl-[ACP] + phosphate = an acyl phosphate + holo-[ACP]. It functions in the pathway lipid metabolism; phospholipid metabolism. Functionally, catalyzes the reversible formation of acyl-phosphate (acyl-PO(4)) from acyl-[acyl-carrier-protein] (acyl-ACP). This enzyme utilizes acyl-ACP as fatty acyl donor, but not acyl-CoA. The chain is Phosphate acyltransferase from Cupriavidus metallidurans (strain ATCC 43123 / DSM 2839 / NBRC 102507 / CH34) (Ralstonia metallidurans).